We begin with the raw amino-acid sequence, 406 residues long: Magnesium transporter NIPA4 (406 aa).

Over 1–57 the chain is Extracellular; that stretch reads MELRVANANGSCENGSIVSLYCSSQEVLCQIVRGISPEEPYNATLITWQERVRKKYG. N-linked (GlcNAc...) asparagine glycans are attached at residues N9, N14, and N42. The chain crosses the membrane as a helical span at residues 58 to 78; the sequence is FYIGVGLAFLSCFLIGTSVIL. Topologically, residues 79–126 are cytoplasmic; the sequence is KKKGLIRLVATGATRAVNGGYGYLKDPMWWAGMATMSAGEVANFGAYA. Residues 127 to 147 form a helical membrane-spanning segment; sequence FAPATVVTPLGALSVLISAIF. At 148–155 the chain is on the extracellular side; it reads SSYCLGES. The helical transmembrane segment at 156–176 threads the bilayer; that stretch reads LNLLGKLGCVICMAGSTVMVI. Residues 177–197 lie on the Cytoplasmic side of the membrane; that stretch reads HAPKEEKVTTVAEMASKMKDT. A helical transmembrane segment spans residues 198–218; that stretch reads GFIVFAVLLVVSCLILIFIVA. Topologically, residues 219-225 are extracellular; the sequence is PRYGQRN. The helical transmembrane segment at 226–246 threads the bilayer; that stretch reads ILIYIIICSVIGSFSVTAVKG. Residues 247 to 263 lie on the Cytoplasmic side of the membrane; sequence LGVTIRNFFQGLPVVRH. The helical transmembrane segment at 264-284 threads the bilayer; that stretch reads PLPYILSLILGLSIIIQVNFL. Residues 285–295 are Extracellular-facing; that stretch reads NRALDIFNTSL. The N-linked (GlcNAc...) asparagine glycan is linked to N292. A helical transmembrane segment spans residues 296-316; sequence VFPIYYVFFTTVVVASSIVLF. Topologically, residues 317-326 are cytoplasmic; sequence KEWYTMSAVD. Residues 327-347 traverse the membrane as a helical segment; that stretch reads IVGTLSGFVTIILGVFMLHAF. Over 348–406 the chain is Extracellular; it reads KDLDINQISLPHTHKNPTPAPAPEPTVIKLEDKNVLVDNIELASTPSPQQKPKVFMTDS.

The protein belongs to the NIPA family.

Its subcellular location is the cell membrane. The catalysed reaction is Mg(2+)(in) = Mg(2+)(out). Acts as a Mg(2+) transporter. Can also transport other divalent cations such as Ba(2+), Sr(2+) and Fe(2+) but to a much less extent than Mg(2+). May be a receptor for ligands (trioxilins A3 and B3) from the hepoxilin pathway. The sequence is that of Magnesium transporter NIPA4 (Nipal4) from Mus musculus (Mouse).